The primary structure comprises 298 residues: Probable phosphoserine phosphatase (298 aa).

Catalysis depends on D82, which acts as the Nucleophile. Residues D82 and D84 each coordinate Mg(2+). D84 (proton donor) is an active-site residue. Substrate contacts are provided by residues E91, R127, 170–171 (SG), and K217. A Mg(2+)-binding site is contributed by D240. N243 contributes to the substrate binding site.

It belongs to the HAD-like hydrolase superfamily. SerB family. Mg(2+) is required as a cofactor.

The catalysed reaction is O-phospho-L-serine + H2O = L-serine + phosphate. It carries out the reaction O-phospho-D-serine + H2O = D-serine + phosphate. It functions in the pathway amino-acid biosynthesis; L-serine biosynthesis; L-serine from 3-phospho-D-glycerate: step 3/3. This Schizosaccharomyces pombe (strain 972 / ATCC 24843) (Fission yeast) protein is Probable phosphoserine phosphatase.